Reading from the N-terminus, the 358-residue chain is Uroporphyrinogen decarboxylase (358 aa).

Substrate is bound by residues 29-33 (RQAGR), Phe-48, Asp-79, Tyr-155, Ser-210, and His-330.

It belongs to the uroporphyrinogen decarboxylase family. As to quaternary structure, homodimer.

The protein resides in the cytoplasm. It catalyses the reaction uroporphyrinogen III + 4 H(+) = coproporphyrinogen III + 4 CO2. The protein operates within porphyrin-containing compound metabolism; protoporphyrin-IX biosynthesis; coproporphyrinogen-III from 5-aminolevulinate: step 4/4. Catalyzes the decarboxylation of four acetate groups of uroporphyrinogen-III to yield coproporphyrinogen-III. The polypeptide is Uroporphyrinogen decarboxylase (Bordetella pertussis (strain Tohama I / ATCC BAA-589 / NCTC 13251)).